An 878-amino-acid chain; its full sequence is NUT family member 2A (878 aa).

4 disordered regions span residues 273–324 (WSQG…DDSC), 417–566 (QKSQ…LSYT), 627–757 (KEKQ…EEEE), and 775–878 (WLPQ…RCSQ). Pro residues-rich tracts occupy residues 278 to 288 (PLPPPPPPAAQ) and 427 to 444 (CLPP…PPAP). Positions 476–487 (TKARRPPPRPHR) are enriched in basic residues. Residues 537–551 (EPEKQREEGEVKQPQ) are compositionally biased toward basic and acidic residues.

It belongs to the NUT family.

The sequence is that of NUT family member 2A (NUTM2A) from Homo sapiens (Human).